The chain runs to 295 residues: 4-hydroxy-tetrahydrodipicolinate synthase (295 aa).

T47 contributes to the pyruvate binding site. Y135 serves as the catalytic Proton donor/acceptor. The active-site Schiff-base intermediate with substrate is the K163. Position 206 (I206) interacts with pyruvate.

It belongs to the DapA family. Homodimer.

The protein resides in the cytoplasm. It carries out the reaction L-aspartate 4-semialdehyde + pyruvate = (2S,4S)-4-hydroxy-2,3,4,5-tetrahydrodipicolinate + H2O + H(+). It functions in the pathway amino-acid biosynthesis; L-lysine biosynthesis via DAP pathway; (S)-tetrahydrodipicolinate from L-aspartate: step 3/4. In terms of biological role, catalyzes the condensation of (S)-aspartate-beta-semialdehyde [(S)-ASA] and pyruvate to 4-hydroxy-tetrahydrodipicolinate (HTPA). The protein is 4-hydroxy-tetrahydrodipicolinate synthase of Staphylococcus aureus (strain bovine RF122 / ET3-1).